The chain runs to 709 residues: NAD(P)H-quinone oxidoreductase subunit 5, chloroplastic (709 aa).

14 consecutive transmembrane segments (helical) span residues 9–29 (WIIP…LLLF), 40–60 (WAFP…DLSI), 89–109 (IDSL…FVLI), 125–145 (FAYM…SNLI), 147–167 (IYXF…FWFT), 219–239 (NEVH…GAVA), 257–277 (PTPI…IFLV), 280–300 (LLPL…IGII), 327–347 (LGYM…FHLI), 354–374 (ALLF…VGYS), 396–416 (IAFL…CFWS), 425–445 (WLYS…TASY), 540–560 (LFPM…AIPF), and 594–614 (FLTN…TAFL).

The protein belongs to the complex I subunit 5 family. As to quaternary structure, NDH is composed of at least 16 different subunits, 5 of which are encoded in the nucleus.

Its subcellular location is the plastid. It localises to the chloroplast thylakoid membrane. It carries out the reaction a plastoquinone + NADH + (n+1) H(+)(in) = a plastoquinol + NAD(+) + n H(+)(out). The catalysed reaction is a plastoquinone + NADPH + (n+1) H(+)(in) = a plastoquinol + NADP(+) + n H(+)(out). Functionally, NDH shuttles electrons from NAD(P)H:plastoquinone, via FMN and iron-sulfur (Fe-S) centers, to quinones in the photosynthetic chain and possibly in a chloroplast respiratory chain. The immediate electron acceptor for the enzyme in this species is believed to be plastoquinone. Couples the redox reaction to proton translocation, and thus conserves the redox energy in a proton gradient. In Pachira aquatica (Guiana chestnut), this protein is NAD(P)H-quinone oxidoreductase subunit 5, chloroplastic (ndhF).